The primary structure comprises 140 residues: Putative pre-16S rRNA nuclease (140 aa).

This sequence belongs to the YqgF nuclease family.

Its subcellular location is the cytoplasm. Its function is as follows. Could be a nuclease involved in processing of the 5'-end of pre-16S rRNA. The protein is Putative pre-16S rRNA nuclease of Mycoplasma pneumoniae (strain ATCC 29342 / M129 / Subtype 1) (Mycoplasmoides pneumoniae).